A 299-amino-acid polypeptide reads, in one-letter code: GTPase Era (299 aa).

In terms of domain architecture, Era-type G spans 5–172 (KSGFVSIIGR…IDVLKTYLPE (168 aa)). The segment at 13-20 (GRPNVGKS) is G1. 13 to 20 (GRPNVGKS) lines the GTP pocket. The interval 39–43 (QTTRN) is G2. The tract at residues 60 to 63 (DTPG) is G3. Residues 60-64 (DTPGI) and 122-125 (NKID) contribute to the GTP site. A G4 region spans residues 122 to 125 (NKID). Residues 151-153 (ISA) form a G5 region. In terms of domain architecture, KH type-2 spans 203-280 (TSEEIPHAIG…YLELWVKVQR (78 aa)).

The protein belongs to the TRAFAC class TrmE-Era-EngA-EngB-Septin-like GTPase superfamily. Era GTPase family. In terms of assembly, monomer.

It is found in the cytoplasm. Its subcellular location is the cell membrane. An essential GTPase that binds both GDP and GTP, with rapid nucleotide exchange. Plays a role in 16S rRNA processing and 30S ribosomal subunit biogenesis and possibly also in cell cycle regulation and energy metabolism. The protein is GTPase Era of Staphylococcus aureus (strain NCTC 8325 / PS 47).